We begin with the raw amino-acid sequence, 188 residues long: Probable manganese efflux pump MntP (188 aa).

5 helical membrane-spanning segments follow: residues 3 to 23 (ITAT…ASIG), 66 to 86 (LEWN…RMII), 106 to 128 (WLLV…GLAF), 143 to 163 (ATLI…SIIG), and 168 to 188 (ILGG…HFHG).

It belongs to the MntP (TC 9.B.29) family.

It localises to the cell inner membrane. In terms of biological role, probably functions as a manganese efflux pump. The protein is Probable manganese efflux pump MntP of Escherichia coli O139:H28 (strain E24377A / ETEC).